Consider the following 364-residue polypeptide: UDP-N-acetylglucosamine--N-acetylmuramyl-(pentapeptide) pyrophosphoryl-undecaprenol N-acetylglucosamine transferase (364 aa).

UDP-N-acetyl-alpha-D-glucosamine is bound by residues 13–15 (TGG), Asn-125, Arg-165, Ser-192, and Gln-293.

It belongs to the glycosyltransferase 28 family. MurG subfamily.

The protein localises to the cell inner membrane. It catalyses the reaction di-trans,octa-cis-undecaprenyl diphospho-N-acetyl-alpha-D-muramoyl-L-alanyl-D-glutamyl-meso-2,6-diaminopimeloyl-D-alanyl-D-alanine + UDP-N-acetyl-alpha-D-glucosamine = di-trans,octa-cis-undecaprenyl diphospho-[N-acetyl-alpha-D-glucosaminyl-(1-&gt;4)]-N-acetyl-alpha-D-muramoyl-L-alanyl-D-glutamyl-meso-2,6-diaminopimeloyl-D-alanyl-D-alanine + UDP + H(+). The protein operates within cell wall biogenesis; peptidoglycan biosynthesis. Its function is as follows. Cell wall formation. Catalyzes the transfer of a GlcNAc subunit on undecaprenyl-pyrophosphoryl-MurNAc-pentapeptide (lipid intermediate I) to form undecaprenyl-pyrophosphoryl-MurNAc-(pentapeptide)GlcNAc (lipid intermediate II). This is UDP-N-acetylglucosamine--N-acetylmuramyl-(pentapeptide) pyrophosphoryl-undecaprenol N-acetylglucosamine transferase from Cereibacter sphaeroides (strain ATCC 17025 / ATH 2.4.3) (Rhodobacter sphaeroides).